The primary structure comprises 162 residues: MQRSEIVQAVTLLVVVFAITTAECTCPGNLDWQEYDGHCYWASTYQVRWNDAQLACQTVHPGAYLATIQSQLENAFISETVSNNRLWIGLNDIDLEGHYVWSNGEATDFTYWSSNNPNNWENQDCGVVNYDTVTGQWDDDDCNKNKNFLCKMPIIGCPPCGI.

The signal sequence occupies residues 1-24 (MQRSEIVQAVTLLVVVFAITTAEC). The C-type lectin domain maps to 25–152 (TCPGNLDWQE…NKNKNFLCKM (128 aa)). Intrachain disulfides connect Cys-26-Cys-39, Cys-56-Cys-150, and Cys-125-Cys-142.

Homotetramer; disulfide-linked. Coelemic fluid.

In terms of biological role, sugar-binding protein which recognizes specific carbohydrate structures and agglutinates a variety of animal cells by binding to cell-surface glycoproteins and glycolipids. Calcium-dependent lectin. Invertebrate lectins may be involved in defense functions. The sequence is that of Lectin BRA-3 from Megabalanus rosa (Acorn barnacle).